Here is a 688-residue protein sequence, read N- to C-terminus: MKMASSSSALSFPLSNIPTCSKKSQQFQKPASLSKSSHTHKPSLKTQILHHKFTKRNLLSLTTALGFTSALGTVLAHPAKAEPEAPIEATSNRMSYSRFLQHLKENEVKKVDLIENGTVAIVEISNPVVGKIQRVRVNLPGLPVDLVREMKEKNVDFAAHPMNVNWGAFLLNFLGNLGFPLILLVSLLLTSSSRRNPAGPNLPFGLGRSKAKFQMEPNTGITFEDVAGVDEAKQDFEEIVEFLKTPEKFSALGAKIPKGVLLTGPPGTGKTLLAKAIAGEAGVPFFSLSGSEFIEMFVGVGASRARDLFNKAKANSPCIVFIDEIDAVGRMRGTGIGGGNDEREQTLNQILTEMDGFAGNTGVIVIAATNRPEILDSALLRPGRFDRQVSVGLPDIRGREEILKVHSRSKKLDKDVSLSVIAMRTPGFSGADLANLMNEAAILAGRRGKDKITLTEIDDSIDRIVAGMEGTKMIDGKSKAIVAYHEVGHAICATLTEGHDPVQKVTLVPRGQARGLTWFLPGEDPTLVSKQQLFARIVGGLGGRAAEDVIFGEPEITTGAAGDLQQVTEIARQMVTMFGMSEIGPWALTDPAVKQNDVVLRMLARNSMSEKLAEDIDSCVKKIIGDAYEVAKKHVRNNREAIDKLVDVLLEKETLTGDEFRAILSEYTDQPLNTDGDVRIRINDLISV.

The transit peptide at 1–75 (MKMASSSSAL…GFTSALGTVL (75 aa)) directs the protein to the chloroplast. Positions 25–36 (QQFQKPASLSKS) are enriched in polar residues. The disordered stretch occupies residues 25–44 (QQFQKPASLSKSSHTHKPSL). The transit peptide at 76–83 (AHPAKAEP) directs the protein to the thylakoid. Residues 84–168 (EAPIEATSNR…AHPMNVNWGA (85 aa)) lie on the Lumenal, thylakoid side of the membrane. The chain crosses the membrane as a helical span at residues 169–189 (FLLNFLGNLGFPLILLVSLLL). The Stromal portion of the chain corresponds to 190–688 (TSSSRRNPAG…RIRINDLISV (499 aa)). 264-271 (GPPGTGKT) provides a ligand contact to ATP. Histidine 485 serves as a coordination point for Zn(2+). The active site involves glutamate 486. 2 residues coordinate Zn(2+): histidine 489 and aspartate 563.

The protein in the N-terminal section; belongs to the AAA ATPase family. It in the C-terminal section; belongs to the peptidase M41 family. It depends on Zn(2+) as a cofactor.

The protein localises to the plastid. The protein resides in the chloroplast thylakoid membrane. Probable ATP-dependent zinc metallopeptidase. Involved in the degradation of the light-harvesting complex of photosystem II (LHC II) during senescence or high light acclimation. The polypeptide is ATP-dependent zinc metalloprotease FTSH 6, chloroplastic (FTSH6) (Arabidopsis thaliana (Mouse-ear cress)).